The following is a 307-amino-acid chain: MGVTIEKLIKDFSLEVIQTGEENVPINVSDVNRPGLQLAGFYNYFAPERIQVIGKAEWSFLEDMSPDLRKKRLNKFFSFDISCLIITRGLEIHEELLKAARKRNLWILRSDMVTTKFISKITMYLSDKMAPETRLHGVLVDVYGIGMLITGESGIGKSETALELIKRGHRLVTDDAVDIKEIDGDLIGRSPEITFGMLEVRGMGIIDVSALYGLSSILNSKQIKIIIHFEHWKDDGDYDRLGVNDEYQDILGVKVKKLRVPIRPGRNIAVIIEAAAANYRYQRMSDISPVDIIEKRMLESMEKESKI.

Residues His-136 and Lys-157 contribute to the active site. 151-158 (GESGIGKS) lines the ATP pocket. Ser-158 lines the Mg(2+) pocket. Residue Asp-175 is the Proton acceptor; for phosphorylation activity. Proton donor; for dephosphorylation activity of the active site. Positions 198 to 207 (LEVRGMGIID) are important for the catalytic mechanism of both phosphorylation and dephosphorylation. Position 199 (Glu-199) interacts with Mg(2+). Arg-240 is a catalytic residue. The important for the catalytic mechanism of dephosphorylation stretch occupies residues 261–266 (PIRPGR).

Belongs to the HPrK/P family. As to quaternary structure, homohexamer. It depends on Mg(2+) as a cofactor.

It catalyses the reaction [HPr protein]-L-serine + ATP = [HPr protein]-O-phospho-L-serine + ADP + H(+). The catalysed reaction is [HPr protein]-O-phospho-L-serine + phosphate + H(+) = [HPr protein]-L-serine + diphosphate. Catalyzes the ATP- as well as the pyrophosphate-dependent phosphorylation of a specific serine residue in HPr, a phosphocarrier protein of the phosphoenolpyruvate-dependent sugar phosphotransferase system (PTS). HprK/P also catalyzes the pyrophosphate-producing, inorganic phosphate-dependent dephosphorylation (phosphorolysis) of seryl-phosphorylated HPr (P-Ser-HPr). The two antagonistic activities of HprK/P are regulated by several intracellular metabolites, which change their concentration in response to the absence or presence of rapidly metabolisable carbon sources (glucose, fructose, etc.) in the growth medium. Therefore, by controlling the phosphorylation state of HPr, HPrK/P is a sensor enzyme that plays a major role in the regulation of carbon metabolism and sugar transport: it mediates carbon catabolite repression (CCR), and regulates PTS-catalyzed carbohydrate uptake and inducer exclusion. This is HPr kinase/phosphorylase from Clostridium perfringens (strain ATCC 13124 / DSM 756 / JCM 1290 / NCIMB 6125 / NCTC 8237 / Type A).